The chain runs to 205 residues: Polyamine-modulated factor 1 (205 aa).

Residues 1 to 28 (MAEASSVNVGSGCAEKGPEELSQEPARP) form a disordered region. Positions 140 to 190 (YLLQQRDALQRRVQRQEAENRQLADAVLAGRRQLEELQLQAQARQQAWQAL) form a coiled coil.

In terms of assembly, component of the MIS12 complex composed of MIS12, DSN1, NSL1 and PMF1. Interacts with COPS7A. Interacts via its coiled-coil domain with the leucine-zipper domain of NFE2L2. The interaction with NFE2L2 is required for the transcriptional regulation of SSAT.

The protein localises to the nucleus. Its subcellular location is the chromosome. The protein resides in the centromere. It localises to the kinetochore. Part of the MIS12 complex which is required for normal chromosome alignment and segregation and kinetochore formation during mitosis. May act as a cotranscription partner of NFE2L2 involved in regulation of polyamine-induced transcription of SSAT. The protein is Polyamine-modulated factor 1 (PMF1) of Bos taurus (Bovine).